The sequence spans 370 residues: 3-dehydroquinate synthase (370 aa).

Residues 112-116 (GVVGD), 136-137 (TS), Lys-149, Lys-158, and 176-179 (TLRT) each bind NAD(+). Positions 191, 254, and 276 each coordinate Zn(2+).

The protein belongs to the sugar phosphate cyclases superfamily. Dehydroquinate synthase family. Co(2+) serves as cofactor. Zn(2+) is required as a cofactor. Requires NAD(+) as cofactor.

It localises to the cytoplasm. It catalyses the reaction 7-phospho-2-dehydro-3-deoxy-D-arabino-heptonate = 3-dehydroquinate + phosphate. The protein operates within metabolic intermediate biosynthesis; chorismate biosynthesis; chorismate from D-erythrose 4-phosphate and phosphoenolpyruvate: step 2/7. Functionally, catalyzes the conversion of 3-deoxy-D-arabino-heptulosonate 7-phosphate (DAHP) to dehydroquinate (DHQ). The chain is 3-dehydroquinate synthase from Xanthomonas oryzae pv. oryzae (strain MAFF 311018).